The sequence spans 250 residues: uncharacterized protein (250 aa).

The 238-residue stretch at 7–244 (LKVEDLHVYR…YKKECGKCYK (238 aa)) folds into the ABC transporter domain. 39–46 (GPNGAGKS) is an ATP binding site.

This sequence belongs to the ABC transporter superfamily.

This is an uncharacterized protein from Methanocaldococcus jannaschii (strain ATCC 43067 / DSM 2661 / JAL-1 / JCM 10045 / NBRC 100440) (Methanococcus jannaschii).